Consider the following 261-residue polypeptide: Cyclin-J18-like (261 aa).

This sequence belongs to the cyclin family.

The polypeptide is Cyclin-J18-like (Oryza sativa subsp. japonica (Rice)).